Consider the following 908-residue polypeptide: Probable serine/threonine-protein kinase DDB_G0278521 (908 aa).

Residues 1–153 (MSNNKIIESL…RGEKLSTLDR (153 aa)) are Extracellular-facing. Residues 154 to 174 (IICFSIIYSQDQILLFLLNFI) form a helical membrane-spanning segment. Residues 175 to 908 (LSNINCNNNN…SDQNDSDLYD (734 aa)) are Cytoplasmic-facing. ANK repeat units lie at residues 258–289 (LKVYPIYFAIVKVIGGGSLVRFLLSILPNVYN), 300–326 (TNRSALFYSTTREMTLLLLQLGCNIHD), 330–361 (KGMLPIHYHSLNGHVDVVKCLIDDSTINALDQ), 362–391 (SNNTPLNLASLSGNLSLAKILLNSGARLSI), and 395–424 (NGRYPIHNACVNGNIDLIRYFLELYSKMNS). Over residues 461 to 472 (NSNNLTNSNSSS) the composition is skewed to low complexity. The interval 461–491 (NSNNLTNSNSSSVGGLRISNGGNTQQQSIQI) is disordered. The segment covering 480-490 (NGGNTQQQSIQ) has biased composition (polar residues). An ANK 6 repeat occupies 495 to 524 (ENNTPIDLLVLNNHFTIAIELLKYEGYIVG). Residues 530-817 (FKTARKIGAG…LPIANIPKFL (288 aa)) enclose the Protein kinase domain. ATP-binding positions include 536–544 (IGAGAFGDV) and K557. D677 functions as the Proton acceptor in the catalytic mechanism.

It belongs to the protein kinase superfamily. TKL Ser/Thr protein kinase family.

Its subcellular location is the membrane. The enzyme catalyses L-seryl-[protein] + ATP = O-phospho-L-seryl-[protein] + ADP + H(+). The catalysed reaction is L-threonyl-[protein] + ATP = O-phospho-L-threonyl-[protein] + ADP + H(+). The polypeptide is Probable serine/threonine-protein kinase DDB_G0278521 (Dictyostelium discoideum (Social amoeba)).